Consider the following 262-residue polypeptide: Outer dense fiber protein 1 (262 aa).

A phosphoserine mark is found at Ser5 and Ser10. Residues 34-38 (RCLCD) form repeat 1. The 2 X 5 AA repeats of [RC]-C-L-C-D stretch occupies residues 34–77 (RCLCDLYMHPYCCCDLHPYPYCLCYSKRSRSCGLCDLYPCCLCD). Position 64 is a phosphoserine (Ser64). Repeat 2 spans residues 73 to 77 (CCLCD). Phosphoserine is present on residues Ser86, Ser122, Ser123, Ser151, Ser167, Ser189, and Ser194. Positions 209–250 (CNPCNPCSPCNPCNPCNPCNPCSPCSPCSPCNPCDPCNPCYP) are C-X-P repeat region.

Interacts (via leucine zipper motif) with TCP11. Interacts with SPAG4. Interacts with KLC3. Interacts with CCDC42.

The protein resides in the cell projection. It is found in the cilium. It localises to the flagellum. The protein localises to the cytoplasm. Its subcellular location is the cytoskeleton. The protein resides in the microtubule organizing center. It is found in the centrosome. Component of the outer dense fibers (ODF) of spermatozoa. ODF are filamentous structures located on the outside of the axoneme in the midpiece and principal piece of the mammalian sperm tail and may help to maintain the passive elastic structures and elastic recoil of the sperm tail. In Sus scrofa (Pig), this protein is Outer dense fiber protein 1 (ODF1).